A 1157-amino-acid chain; its full sequence is ATP-dependent helicase/deoxyribonuclease subunit B (1157 aa).

Residues 1-299 (MSIRFIIGRA…SHLEKYFFVR (299 aa)) form the UvrD-like helicase ATP-binding domain. ATP is bound at residue 8–15 (GRAGAGKT). Positions 279-590 (GNTARFKSPA…LVASLERSRN (312 aa)) constitute a UvrD-like helicase C-terminal domain. [4Fe-4S] cluster-binding residues include Cys792, Cys1112, Cys1115, and Cys1121.

It belongs to the helicase family. AddB/RexB type 1 subfamily. Heterodimer of AddA and AddB. Requires Mg(2+) as cofactor. It depends on [4Fe-4S] cluster as a cofactor.

In terms of biological role, the heterodimer acts as both an ATP-dependent DNA helicase and an ATP-dependent, dual-direction single-stranded exonuclease. Recognizes the chi site generating a DNA molecule suitable for the initiation of homologous recombination. The AddB subunit has 5' -&gt; 3' nuclease activity but not helicase activity. The protein is ATP-dependent helicase/deoxyribonuclease subunit B of Pelotomaculum thermopropionicum (strain DSM 13744 / JCM 10971 / SI).